The chain runs to 182 residues: NADH-quinone oxidoreductase subunit 9 (182 aa).

2 4Fe-4S ferredoxin-type domains span residues 43–73 (LTRH…VEPA) and 89–118 (KVYE…LGYD). Positions 53, 56, 57, 59, 63, 98, 99, 101, 104, and 108 each coordinate [4Fe-4S] cluster.

This sequence belongs to the complex I 23 kDa subunit family. NDH-1 is composed of 15 different subunits, Nqo1 to Nqo15. The complex has a L-shaped structure, with the hydrophobic arm (subunits Nqo7, Nqo8 and Nqo10 to Nqo14) embedded in the membrane and the hydrophilic peripheral arm (subunits Nqo1 to Nqo6, Nqo9 and Nqo15) protruding into the bacterial cytoplasm. The hydrophilic domain contains all the redox centers. It depends on [4Fe-4S] cluster as a cofactor.

It is found in the cell membrane. It carries out the reaction a quinone + NADH + 5 H(+)(in) = a quinol + NAD(+) + 4 H(+)(out). Functionally, NDH-1 shuttles electrons from NADH, via FMN and iron-sulfur (Fe-S) centers, to quinones in the respiratory chain. The immediate electron acceptor for the enzyme in this species is menaquinone. Couples the redox reaction to proton translocation (for every two electrons transferred, four hydrogen ions are translocated across the cytoplasmic membrane), and thus conserves the redox energy in a proton gradient required for the synthesis of ATP. The role of the Nqo9 subunit appears to provide a 'connecting chain' of two clusters between cluster N5 and the terminal cluster N2, and to stabilize the structure of the complex by interacting with other subunits. This Thermus thermophilus (strain ATCC 27634 / DSM 579 / HB8) protein is NADH-quinone oxidoreductase subunit 9 (nqo9).